The sequence spans 138 residues: Large ribosomal subunit protein uL16c (138 aa).

The interval 1 to 21 (MLSPQKTKFRKQHRGRMKGVS) is disordered. The segment covering 7 to 21 (TKFRKQHRGRMKGVS) has biased composition (basic residues).

Belongs to the universal ribosomal protein uL16 family. Part of the 50S ribosomal subunit.

The protein localises to the plastid. It localises to the chloroplast. This chain is Large ribosomal subunit protein uL16c, found in Cycas taitungensis (Prince sago).